We begin with the raw amino-acid sequence, 93 residues long: Large ribosomal subunit protein uL23 (93 aa).

It belongs to the universal ribosomal protein uL23 family. Part of the 50S ribosomal subunit. Contacts protein L29, and trigger factor when it is bound to the ribosome.

Its function is as follows. One of the early assembly proteins it binds 23S rRNA. One of the proteins that surrounds the polypeptide exit tunnel on the outside of the ribosome. Forms the main docking site for trigger factor binding to the ribosome. This Sulfurovum sp. (strain NBC37-1) protein is Large ribosomal subunit protein uL23.